The primary structure comprises 515 residues: Probable cytochrome P450 6d4 (515 aa).

Cysteine 457 provides a ligand contact to heme.

Belongs to the cytochrome P450 family. Heme serves as cofactor.

The protein resides in the endoplasmic reticulum membrane. Its subcellular location is the microsome membrane. May be involved in the metabolism of insect hormones and in the breakdown of synthetic insecticides. In Drosophila melanogaster (Fruit fly), this protein is Probable cytochrome P450 6d4 (Cyp6d4).